The following is a 297-amino-acid chain: Probable endonuclease 4 (297 aa).

Zn(2+) contacts are provided by H69, H110, E145, D179, H182, H214, D227, H229, and E259.

Belongs to the AP endonuclease 2 family. Zn(2+) serves as cofactor.

It carries out the reaction Endonucleolytic cleavage to 5'-phosphooligonucleotide end-products.. In terms of biological role, endonuclease IV plays a role in DNA repair. It cleaves phosphodiester bonds at apurinic or apyrimidinic (AP) sites, generating a 3'-hydroxyl group and a 5'-terminal sugar phosphate. The polypeptide is Probable endonuclease 4 (Bacillus subtilis (strain 168)).